The primary structure comprises 146 residues: Large ribosomal subunit protein uL15 (146 aa).

Residues 1–51 (MKLHELKPAKGSRKVRNRVGRGTSSGNGKTSGRGQKGQKARSGGGVRLGFE) are disordered. Positions 10–19 (KGSRKVRNRV) are enriched in basic residues. Composition is skewed to gly residues over residues 23–35 (TSSG…GRGQ) and 42–51 (SGGGVRLGFE).

The protein belongs to the universal ribosomal protein uL15 family. As to quaternary structure, part of the 50S ribosomal subunit.

Functionally, binds to the 23S rRNA. This chain is Large ribosomal subunit protein uL15, found in Streptococcus equi subsp. equi (strain 4047).